Consider the following 183-residue polypeptide: (2E)-enoyl-[ACP] glycyltransferase (183 aa).

It belongs to the FcoT family.

It carries out the reaction a (3R)-3-[(carboxymethyl)amino]fatty acid + holo-[ACP] + H(+) = a (2E)-enoyl-[ACP] + glycine + H2O. The enzyme catalyses (3R)-3-[(carboxylmethyl)amino]decanoate + holo-[ACP] + H(+) = (2E)-decenoyl-[ACP] + glycine + H2O. The catalysed reaction is a fatty acyl-CoA + H2O = a fatty acid + CoA + H(+). Its function is as follows. Involved in the biosynthesis of a unique class of isonitrile lipopeptides (INLPs) that seem to play a role in metal acquisition. Catalyzes a Michael addition of glycine to the beta-position of an alpha,beta-unsaturated fatty acyl-[ACP], producing a (3R)-3-[(carboxymethyl)amino]fatty acid. Acts on the (2E)-decenoyl moiety loaded on the acyl-carrier protein (ACP) BQ2027_MB0103, forming the product (3R)-3-[(carboxymethyl)amino]decanoate released from the ACP. Displays thioesterase activity with a preference for long chain fatty acyl groups. The protein is (2E)-enoyl-[ACP] glycyltransferase of Mycobacterium bovis (strain ATCC BAA-935 / AF2122/97).